Consider the following 421-residue polypeptide: Ankyrin repeat domain-containing protein 61 (421 aa).

ANK repeat units follow at residues 27–57 (TLHS…NQPL), 74–103 (QPIF…DPEV), 107–146 (QGFT…NAVL), 166–195 (NKHS…QVNA), 199–228 (SSMT…NVNC), 233–272 (TGNT…QVNA), 276–305 (EGQT…NVNI), and 309–342 (NGES…PLRL).

In Mus musculus (Mouse), this protein is Ankyrin repeat domain-containing protein 61 (Ankrd61).